The following is a 76-amino-acid chain: Neuromacin-like protein (76 aa).

4 disulfides stabilise this stretch: Cys-18-Cys-25, Cys-40-Cys-44, Cys-54-Cys-61, and Cys-72-Cys-74.

Belongs to the macin family.

The protein localises to the secreted. The chain is Neuromacin-like protein from Aplysia californica (California sea hare).